We begin with the raw amino-acid sequence, 727 residues long: NADH-ubiquinone oxidoreductase 75 kDa subunit, mitochondrial (727 aa).

Residues 1–23 (MLRIPVKRALIGLSKSPKGYVRS) constitute a mitochondrion transit peptide. The 2Fe-2S ferredoxin-type domain maps to 30–108 (NLIEVFVDGQ…GWNILTNSEK (79 aa)). [2Fe-2S] cluster is bound by residues Cys64, Cys75, and Cys78. Lys84 is modified (N6-acetyllysine). Cys92 contacts [2Fe-2S] cluster. The 40-residue stretch at 108 to 147 (KSKKAREGVMEFLLANHPLDCPICDQGGECDLQDQSMMFG) folds into the 4Fe-4S His(Cys)3-ligated-type domain. Residues His124, Cys128, Cys131, Cys137, Cys176, Cys179, Cys182, and Cys226 each coordinate [4Fe-4S] cluster. The region spanning 245–301 (TRKTESIDVMDAVGSNIVVSTRTGEVMRILPRMHEDINEEWISDKTRFAYDGLKRQR) is the 4Fe-4S Mo/W bis-MGD-type domain. N6-acetyllysine is present on residues Lys499 and Lys709.

This sequence belongs to the complex I 75 kDa subunit family. Core subunit of respiratory chain NADH dehydrogenase (Complex I) which is composed of 45 different subunits. This is the largest subunit of complex I and it is a component of the iron-sulfur (IP) fragment of the enzyme. Complex I associates with ubiquinol-cytochrome reductase complex (Complex III) to form supercomplexes. Interacts with MDM2 and AKAP1. The cofactor is [2Fe-2S] cluster. [4Fe-4S] cluster serves as cofactor.

It localises to the mitochondrion inner membrane. It carries out the reaction a ubiquinone + NADH + 5 H(+)(in) = a ubiquinol + NAD(+) + 4 H(+)(out). Its function is as follows. Core subunit of the mitochondrial membrane respiratory chain NADH dehydrogenase (Complex I) which catalyzes electron transfer from NADH through the respiratory chain, using ubiquinone as an electron acceptor. Essential for catalysing the entry and efficient transfer of electrons within complex I. Plays a key role in the assembly and stability of complex I and participates in the association of complex I with ubiquinol-cytochrome reductase complex (Complex III) to form supercomplexes. In Rattus norvegicus (Rat), this protein is NADH-ubiquinone oxidoreductase 75 kDa subunit, mitochondrial (Ndufs1).